Here is a 676-residue protein sequence, read N- to C-terminus: Cysteine-rich receptor-like protein kinase 4 (676 aa).

The signal sequence occupies residues 1–16 (MSFFWLFPFLLHLSFA). Residues 17 to 287 (DSLSPLSAPV…ISERGKGRNS (271 aa)) are Extracellular-facing. Gnk2-homologous domains are found at residues 31–135 (HLNH…HRNI) and 146–246 (ILLN…NYSF). 7 N-linked (GlcNAc...) asparagine glycosylation sites follow: Asn33, Asn46, Asn64, Asn152, Asn181, Asn243, and Asn248. The disordered stretch occupies residues 252–279 (TRSSSPPSLPPRSTPQQQLKLAPPPLIS). N-linked (GlcNAc...) asparagine glycosylation is present at Asn286. The helical transmembrane segment at 288-308 (SVIIVVVVPIIALLLLFVAFF) threads the bilayer. The Cytoplasmic segment spans residues 309-676 (SLRAKKTRTN…DASITNVTPR (368 aa)). In terms of domain architecture, Protein kinase spans 351 to 631 (FCETNKLGQG…QMLTTSSIAL (281 aa)). ATP contacts are provided by residues 357–365 (LGQGGFGEV) and Lys379. Phosphotyrosine is present on Tyr424. Asp476 acts as the Proton acceptor in catalysis. Thr516 carries the phosphothreonine modification. Residue Tyr524 is modified to Phosphotyrosine.

Belongs to the protein kinase superfamily. Ser/Thr protein kinase family. CRK subfamily.

It is found in the membrane. The catalysed reaction is L-seryl-[protein] + ATP = O-phospho-L-seryl-[protein] + ADP + H(+). It catalyses the reaction L-threonyl-[protein] + ATP = O-phospho-L-threonyl-[protein] + ADP + H(+). The chain is Cysteine-rich receptor-like protein kinase 4 (CRK4) from Arabidopsis thaliana (Mouse-ear cress).